A 241-amino-acid chain; its full sequence is Superoxide dismutase [Mn] 2, mitochondrial (241 aa).

H60, H108, D197, and H201 together coordinate Mn(2+).

This sequence belongs to the iron/manganese superoxide dismutase family. Homotetramer. Requires Mn(2+) as cofactor.

The protein resides in the mitochondrion matrix. The catalysed reaction is 2 superoxide + 2 H(+) = H2O2 + O2. In terms of biological role, destroys superoxide anion radicals which are normally produced within the cells and which are toxic to biological systems. The protein is Superoxide dismutase [Mn] 2, mitochondrial (MSD2) of Arabidopsis thaliana (Mouse-ear cress).